Here is a 244-residue protein sequence, read N- to C-terminus: Lectin (244 aa).

Residues 1–20 form a disordered region; the sequence is TETETTSFSIPKTDQPSSPK.

This sequence belongs to the leguminous lectin family. Homodimer. In contrast to other Lathyrus lectins which are tetramer of two alpha and two beta chains.

The sequence is that of Lectin from Lathyrus sphaericus (Spring vetchling).